A 383-amino-acid chain; its full sequence is 3-ketosteroid-9-alpha-monooxygenase, oxygenase component (383 aa).

In terms of domain architecture, Rieske spans 24–126 (WHCLGPVKNF…TDVRGGLLFV (103 aa)). Cys65, His67, Cys84, and His87 together coordinate [2Fe-2S] cluster. Fe cation-binding residues include Asn173, His179, His184, and Asp302.

In terms of assembly, homotrimer. The two-component system 3-ketosteroid-9-alpha-monooxygenase is composed of an oxygenase component KshA and a reductase component KshB. [2Fe-2S] cluster serves as cofactor. Fe cation is required as a cofactor.

It carries out the reaction androsta-1,4-diene-3,17-dione + 2 reduced [2Fe-2S]-[ferredoxin] + O2 + 2 H(+) = 9alpha-hydroxyandrosta-1,4-diene-3,17-dione + 2 oxidized [2Fe-2S]-[ferredoxin] + H2O. The protein operates within lipid metabolism; steroid biosynthesis. Its function is as follows. Involved in the degradation of cholesterol. Catalyzes the introduction of a 9a-hydroxyl moiety into 1,4-androstadiene-3,17-dione (ADD) to yield the 9alpha-hydroxy-1,4-androstadiene-3,17-dione (9OHADD) intermediate which spontaneously form 3-hydroxy-9,10-seconandrost-1,3,5(10)-triene-9,17-dione (HSA) via the meta-cleavage of ring B with concomitant aromatization of ring A. The protein is 3-ketosteroid-9-alpha-monooxygenase, oxygenase component (kshA) of Mycolicibacterium smegmatis (strain ATCC 700084 / mc(2)155) (Mycobacterium smegmatis).